Reading from the N-terminus, the 978-residue chain is LRR receptor-like serine/threonine-protein kinase ER1 (978 aa).

Positions 1–24 (MTPAPAAASYRALVALLLVAVAVA) are cleaved as a signal peptide. Over 25–577 (DDGSTLLEIK…GHQQKPLISK (553 aa)) the chain is Extracellular. 2 N-linked (GlcNAc...) asparagine glycosylation sites follow: Asn-62 and Asn-71. 20 LRR repeats span residues 66–87 (AVAA…AVGR), 88–112 (LKGI…IGDC), 114–136 (SLKT…VSKL), 137–159 (KHIE…TLSQ), 160–184 (LPNL…IYWN), 186–208 (VLQY…ICQL), 209–232 (TGLW…IGNC), 233–257 (TSFQ…GFLQ), 259–278 (ATLS…VIGL), 279–302 (MQAL…ILGN), 304–327 (TYTE…LGNM), 328–350 (STLH…EFGK), 352–375 (TGLF…ISSC), 377–399 (NLNS…LHKL), 400–423 (ESMT…LSRI), 424–447 (NNLD…IGSL), 449–470 (HLLR…EIGN), 471–494 (LRSI…ELGM), 496–518 (QNLM…LMNC), and 519–543 (FSLN…NFSR). Asn-218 and Asn-231 each carry an N-linked (GlcNAc...) asparagine glycan. Asn-302 and Asn-326 each carry an N-linked (GlcNAc...) asparagine glycan. 3 N-linked (GlcNAc...) asparagine glycosylation sites follow: Asn-371, Asn-389, and Asn-406. A glycan (N-linked (GlcNAc...) asparagine) is linked at Asn-454. N-linked (GlcNAc...) asparagine glycosylation is found at Asn-507, Asn-525, and Asn-540. Residues 578 to 598 (AAILGIAVGGLVILLMILVAV) traverse the membrane as a helical segment. The Cytoplasmic portion of the chain corresponds to 599 to 978 (CRPHSPPVFK…FGEVISQNTE (380 aa)). Positions 645–916 (LSEKYIIGYG…EVVRVLDCLV (272 aa)) constitute a Protein kinase domain. ATP-binding positions include 651 to 659 (IGYGASSTV) and Lys-673. Asp-771 acts as the Proton acceptor in catalysis.

This sequence belongs to the protein kinase superfamily. Ser/Thr protein kinase family.

Its subcellular location is the cell membrane. The enzyme catalyses L-seryl-[protein] + ATP = O-phospho-L-seryl-[protein] + ADP + H(+). It catalyses the reaction L-threonyl-[protein] + ATP = O-phospho-L-threonyl-[protein] + ADP + H(+). Receptor kinase involved in the regulation of thermotolerance. Functions as a positive regulator of heat tolerance. May be involved in the regulation of cell proliferation and cell growth. This is LRR receptor-like serine/threonine-protein kinase ER1 from Oryza sativa subsp. japonica (Rice).